The chain runs to 278 residues: UPF0761 membrane protein CBU_1578 (278 aa).

Transmembrane regions (helical) follow at residues 38-58, 68-88, 92-112, 134-154, 177-197, 207-227, and 244-264; these read LLAL…VPAF, LIWE…LSQL, VTGL…LLMY, FLIY…VMLL, LLFV…NWVL, AVIG…AFTV, and VIPI…LGAV.

The protein belongs to the UPF0761 family.

It is found in the cell inner membrane. This Coxiella burnetii (strain RSA 493 / Nine Mile phase I) protein is UPF0761 membrane protein CBU_1578.